Consider the following 176-residue polypeptide: dCTP deaminase (176 aa).

Residues 99 to 104 (RSTLAR) and D115 contribute to the dCTP site. E125 (proton donor/acceptor) is an active-site residue. Q163 lines the dCTP pocket.

The protein belongs to the dCTP deaminase family. Homotrimer.

It carries out the reaction dCTP + H2O + H(+) = dUTP + NH4(+). It functions in the pathway pyrimidine metabolism; dUMP biosynthesis; dUMP from dCTP (dUTP route): step 1/2. Catalyzes the deamination of dCTP to dUTP. This chain is dCTP deaminase, found in Pyrobaculum neutrophilum (strain DSM 2338 / JCM 9278 / NBRC 100436 / V24Sta) (Thermoproteus neutrophilus).